The primary structure comprises 337 residues: Phenylalanine--tRNA ligase alpha subunit (337 aa).

Glu258 serves as a coordination point for Mg(2+).

It belongs to the class-II aminoacyl-tRNA synthetase family. Phe-tRNA synthetase alpha subunit type 1 subfamily. As to quaternary structure, tetramer of two alpha and two beta subunits. It depends on Mg(2+) as a cofactor.

The protein localises to the cytoplasm. It catalyses the reaction tRNA(Phe) + L-phenylalanine + ATP = L-phenylalanyl-tRNA(Phe) + AMP + diphosphate + H(+). The chain is Phenylalanine--tRNA ligase alpha subunit from Burkholderia mallei (strain ATCC 23344).